The primary structure comprises 764 residues: Elongation factor G, mitochondrial (764 aa).

A mitochondrion-targeting transit peptide spans 1 to 23 (MIRSLRAVSRLGARGFSSFAAAR). In terms of domain architecture, tr-type G spans 56–337 (ARMRNIGISA…AICEYLPDPS (282 aa)). GTP contacts are provided by residues 65–72 (AHIDSGKT), 136–140 (DTPGH), and 190–193 (NKMD).

It belongs to the TRAFAC class translation factor GTPase superfamily. Classic translation factor GTPase family. EF-G/EF-2 subfamily.

The protein localises to the mitochondrion. It participates in protein biosynthesis; polypeptide chain elongation. Mitochondrial GTPase that catalyzes the GTP-dependent ribosomal translocation step during translation elongation. During this step, the ribosome changes from the pre-translocational (PRE) to the post-translocational (POST) state as the newly formed A-site-bound peptidyl-tRNA and P-site-bound deacylated tRNA move to the P and E sites, respectively. Catalyzes the coordinated movement of the two tRNA molecules, the mRNA and conformational changes in the ribosome. The protein is Elongation factor G, mitochondrial of Yarrowia lipolytica (strain CLIB 122 / E 150) (Yeast).